The primary structure comprises 546 residues: CTP synthase (546 aa).

Positions 1-266 (MTTRYIFVTG…DDLVVKRFGL (266 aa)) are amidoligase domain. Residue Ser-14 participates in CTP binding. A UTP-binding site is contributed by Ser-14. Residues 15–20 (SLGKGI) and Asp-72 contribute to the ATP site. Mg(2+) contacts are provided by Asp-72 and Glu-140. CTP is bound by residues 147–149 (DIE), 187–192 (KTKPTQ), and Lys-223. Residues 187–192 (KTKPTQ) and Lys-223 each bind UTP. Residue 239-241 (KDV) participates in ATP binding. One can recognise a Glutamine amidotransferase type-1 domain in the interval 291–542 (VIGMVGKYIE…VAAASAHQKR (252 aa)). Residue Gly-352 coordinates L-glutamine. Catalysis depends on Cys-379, which acts as the Nucleophile; for glutamine hydrolysis. L-glutamine is bound by residues 380–383 (LGMQ), Glu-403, and Arg-470. Residues His-515 and Glu-517 contribute to the active site.

Belongs to the CTP synthase family. In terms of assembly, homotetramer.

The enzyme catalyses UTP + L-glutamine + ATP + H2O = CTP + L-glutamate + ADP + phosphate + 2 H(+). The catalysed reaction is L-glutamine + H2O = L-glutamate + NH4(+). It carries out the reaction UTP + NH4(+) + ATP = CTP + ADP + phosphate + 2 H(+). It functions in the pathway pyrimidine metabolism; CTP biosynthesis via de novo pathway; CTP from UDP: step 2/2. Its activity is regulated as follows. Allosterically activated by GTP, when glutamine is the substrate; GTP has no effect on the reaction when ammonia is the substrate. The allosteric effector GTP functions by stabilizing the protein conformation that binds the tetrahedral intermediate(s) formed during glutamine hydrolysis. Inhibited by the product CTP, via allosteric rather than competitive inhibition. Catalyzes the ATP-dependent amination of UTP to CTP with either L-glutamine or ammonia as the source of nitrogen. Regulates intracellular CTP levels through interactions with the four ribonucleotide triphosphates. In Shewanella sp. (strain ANA-3), this protein is CTP synthase.